A 264-amino-acid polypeptide reads, in one-letter code: Pyridoxine 5'-phosphate synthase (264 aa).

Over residues 1 to 21 (MTDTAQILPTTLEQNPQNTSK) the composition is skewed to polar residues. Residues 1–22 (MTDTAQILPTTLEQNPQNTSKK) are disordered. N28 contacts 3-amino-2-oxopropyl phosphate. 30 to 31 (DH) lines the 1-deoxy-D-xylulose 5-phosphate pocket. R39 is a binding site for 3-amino-2-oxopropyl phosphate. H64 serves as the catalytic Proton acceptor. Residues R66 and H71 each coordinate 1-deoxy-D-xylulose 5-phosphate. E91 (proton acceptor) is an active-site residue. Residue T121 coordinates 1-deoxy-D-xylulose 5-phosphate. H217 acts as the Proton donor in catalysis. 3-amino-2-oxopropyl phosphate-binding positions include G218 and 239–240 (GH).

This sequence belongs to the PNP synthase family. Homooctamer; tetramer of dimers.

It localises to the cytoplasm. The enzyme catalyses 3-amino-2-oxopropyl phosphate + 1-deoxy-D-xylulose 5-phosphate = pyridoxine 5'-phosphate + phosphate + 2 H2O + H(+). It functions in the pathway cofactor biosynthesis; pyridoxine 5'-phosphate biosynthesis; pyridoxine 5'-phosphate from D-erythrose 4-phosphate: step 5/5. Catalyzes the complicated ring closure reaction between the two acyclic compounds 1-deoxy-D-xylulose-5-phosphate (DXP) and 3-amino-2-oxopropyl phosphate (1-amino-acetone-3-phosphate or AAP) to form pyridoxine 5'-phosphate (PNP) and inorganic phosphate. This Psychrobacter cryohalolentis (strain ATCC BAA-1226 / DSM 17306 / VKM B-2378 / K5) protein is Pyridoxine 5'-phosphate synthase.